Reading from the N-terminus, the 112-residue chain is UPF0122 protein CPF_1968 (112 aa).

It belongs to the UPF0122 family.

Functionally, might take part in the signal recognition particle (SRP) pathway. This is inferred from the conservation of its genetic proximity to ftsY/ffh. May be a regulatory protein. This Clostridium perfringens (strain ATCC 13124 / DSM 756 / JCM 1290 / NCIMB 6125 / NCTC 8237 / Type A) protein is UPF0122 protein CPF_1968.